A 203-amino-acid polypeptide reads, in one-letter code: High-molecular weight cobalt-containing nitrile hydratase subunit alpha (203 aa).

Co(3+) is bound by residues Cys-102, Cys-105, Ser-106, and Cys-107.

This sequence belongs to the nitrile hydratase subunit alpha family. Heterodimer of an alpha and a beta chain. It depends on Co(3+) as a cofactor.

It catalyses the reaction an aliphatic primary amide = an aliphatic nitrile + H2O. NHase catalyzes the hydration of various nitrile compounds to the corresponding amides. The chain is High-molecular weight cobalt-containing nitrile hydratase subunit alpha (nhhA) from Rhodococcus rhodochrous.